Reading from the N-terminus, the 800-residue chain is Ion-translocating oxidoreductase complex subunit C (800 aa).

2 4Fe-4S ferredoxin-type domains span residues 367–398 (DEFSVPQAEQPCIRCGACADVCPARLLPQQLY) and 408–437 (KARGYHLQECIECGACAYVCPSNIPLVQYY). [4Fe-4S] cluster is bound by residues C378, C381, C384, C388, C417, C420, C423, and C427. Low complexity-rich tracts occupy residues 536–553 (GATPAPAATDSDAAAPAP), 571–583 (AKQAGATPAPAAT), 599–617 (AAIARAKAKQAGATPAPAA), 647–667 (AKQAGATPAPATTDSDAADPA), and 675–690 (AAIAAAIARAKAKQAA). 3 disordered regions span residues 536–558 (GATPAPAATDSDAAAPAPQDDPR), 571–631 (AKQA…QDDP), and 647–706 (AKQA…ENTD). Polar residues predominate over residues 693–705 (HATTEPVTVQENT).

The protein belongs to the 4Fe4S bacterial-type ferredoxin family. RnfC subfamily. The complex is composed of six subunits: RnfA, RnfB, RnfC, RnfD, RnfE and RnfG. It depends on [4Fe-4S] cluster as a cofactor.

It localises to the cell inner membrane. Functionally, part of a membrane-bound complex that couples electron transfer with translocation of ions across the membrane. The chain is Ion-translocating oxidoreductase complex subunit C from Edwardsiella ictaluri (strain 93-146).